The chain runs to 263 residues: 5'-nucleotidase SurE (263 aa).

Residues Asp-15, Asp-16, Ser-46, and Asn-102 each contribute to the a divalent metal cation site.

Belongs to the SurE nucleotidase family. Requires a divalent metal cation as cofactor.

The protein resides in the cytoplasm. The enzyme catalyses a ribonucleoside 5'-phosphate + H2O = a ribonucleoside + phosphate. In terms of biological role, nucleotidase that shows phosphatase activity on nucleoside 5'-monophosphates. This Chlorobaculum tepidum (strain ATCC 49652 / DSM 12025 / NBRC 103806 / TLS) (Chlorobium tepidum) protein is 5'-nucleotidase SurE.